The chain runs to 337 residues: Neurogenic differentiation factor 6 (337 aa).

Residues 43–82 (LRGKSIKRAPGEETEKEEEEEDREEEDENGLPRRRGLRKK) form a disordered region. Over residues 54–71 (EETEKEEEEEDREEEDEN) the composition is skewed to acidic residues. Residues 80–86 (RKKKTTK) carry the Nuclear localization signal motif. Residues 94–146 (FRRQEANARERNRMHGLNDALDNLRKVVPCYSKTQKLSKIETLRLAKNYIWAL) form the bHLH domain.

Efficient DNA binding requires dimerization with another bHLH protein.

It localises to the nucleus. Its function is as follows. Activates E box-dependent transcription in collaboration with TCF3/E47. May be a trans-acting factor involved in the development and maintenance of the mammalian nervous system. Transactivates the promoter of its own gene. This is Neurogenic differentiation factor 6 (NEUROD6) from Homo sapiens (Human).